A 382-amino-acid chain; its full sequence is Probable G-protein coupled receptor 132 (382 aa).

Residues 1–42 (MRSEPTNAAGNTTLGVTSVLQSTSVPSSETCHVSYEESRVVL) lie on the Extracellular side of the membrane. A glycan (N-linked (GlcNAc...) asparagine) is linked at Asn-11. A helical transmembrane segment spans residues 43–65 (VVVYSAVCLLGLPANCLTAWLTL). The Cytoplasmic portion of the chain corresponds to 66 to 76 (LQVLQRNVLAV). A helical membrane pass occupies residues 77-99 (YLFCLSLCELLYISTVPLWIIYI). Residues 100 to 113 (QNQHKWNLGPQACK) are Extracellular-facing. Cys-112 and Cys-184 are oxidised to a cystine. A helical membrane pass occupies residues 114–135 (VTAYIFFCNIYISILLLCCISC). The Cytoplasmic segment spans residues 136–155 (DRYMAVVYALESRGHRHQRT). Residues 156–175 (AVTISACVILLVGLVNYPVF) traverse the membrane as a helical segment. Residues 176–198 (DMKVEKSFCFEPLRMNSKIAGYH) are Extracellular-facing. The chain crosses the membrane as a helical span at residues 199-221 (YLRFTFGFAIPLGILAFTNHQIF). Residues 222–241 (RSIKLSDSLSAAQKNKVKRS) lie on the Cytoplasmic side of the membrane. A helical membrane pass occupies residues 242–261 (AIAVVTIFLVCFAPYHVVLL). The Extracellular portion of the chain corresponds to 262–286 (VKAASFSFYQGDMDAVCAFESRLYT). Residues 287 to 309 (VSMVFLCLSTVNSVADPIIYVLG) traverse the membrane as a helical segment. The Cytoplasmic segment spans residues 310–382 (TDHSRQEVSR…SPERLPEELC (73 aa)).

Belongs to the G-protein coupled receptor 1 family. As to expression, highly expressed in hematopoietic tissues rich in lymphocytes like spleen and thymus. Weakly expressed in heart and lung. Highly expressed in infiltrating macrophages within atherosclerotic lesions.

The protein resides in the cell membrane. Functionally, may be a receptor for oxidized free fatty acids derived from linoleic and arachidonic acids such as 9-hydroxyoctadecadienoic acid (9-HODE). Activates a G alpha protein, most likely G alpha(q). May be involved in apoptosis. Functions at the G2/M checkpoint to delay mitosis. May function as a sensor that monitors the oxidative states and mediates appropriate cellular responses such as secretion of paracrine signals and attenuation of proliferation. May mediate ths accumulation of intracellular inositol phosphates at acidic pH through proton-sensing activity. In Mus musculus (Mouse), this protein is Probable G-protein coupled receptor 132 (Gpr132).